The primary structure comprises 555 residues: E3 ubiquitin-protein ligase NEURL1B (555 aa).

One can recognise an NHR 1 domain in the interval 38–194; the sequence is APRFHAQAKG…ITDEVQLLES (157 aa). T199 is modified (phosphothreonine). In terms of domain architecture, NHR 2 spans 279–433; it reads DLRFHATRGP…GVAGQLRLLG (155 aa). Residues 436-493 form a disordered region; sequence QSSPATTTPSGSLSGSQDDSDSDMTFSVNQSSSASESSLVTAPSSPLSPPVSPVFSPP. The segment covering 462 to 480 has biased composition (low complexity); it reads SVNQSSSASESSLVTAPSS. Residues 481 to 493 are compositionally biased toward pro residues; that stretch reads PLSPPVSPVFSPP. Residues 503-543 form an RING-type zinc finger; it reads CTVCFDGEVDTVIYTCGHMCLCHSCGLRLKRQARACCPICR.

As to quaternary structure, interacts with JAG1, DLL1 and DLL4. Highest expression in brain, prostate and small intestine. In the brain the levels are higher in fetal than in adult stage. In the adult brain the highest levels are detected in the olfactory system, cerebellar cortex, optic nerve and the frontal lobe.

The protein localises to the cytoplasm. It carries out the reaction S-ubiquitinyl-[E2 ubiquitin-conjugating enzyme]-L-cysteine + [acceptor protein]-L-lysine = [E2 ubiquitin-conjugating enzyme]-L-cysteine + N(6)-ubiquitinyl-[acceptor protein]-L-lysine.. It participates in protein modification; protein ubiquitination. E3 ubiquitin-protein ligase involved in regulation of the Notch pathway through influencing the stability and activity of several Notch ligands. The polypeptide is E3 ubiquitin-protein ligase NEURL1B (NEURL1B) (Homo sapiens (Human)).